Reading from the N-terminus, the 254-residue chain is Nickel import ATP-binding protein NikO (254 aa).

Residues 5-246 (FELQGVQFAY…TALLRRARLL (242 aa)) enclose the ABC transporter domain. 37-44 (GANGSGKS) is a binding site for ATP.

Belongs to the ABC transporter superfamily. In terms of assembly, forms an energy-coupling factor (ECF) transporter complex composed of an ATP-binding protein (A component, NikO), a transmembrane protein (T component, NikQ) and a fused possible substrate-capture protein (S component, NikMN) of unknown stoichimetry.

It is found in the cell inner membrane. It catalyses the reaction Ni(2+)(out) + ATP + H2O = Ni(2+)(in) + ADP + phosphate + H(+). Its function is as follows. Part of the energy-coupling factor (ECF) transporter complex NikMNQO involved in nickel import. The complex confers nickel uptake upon expression in E.coli. Shows very low activity with cobalt. Presumably responsible for energy coupling to the transport system. In Rhodobacter capsulatus (strain ATCC BAA-309 / NBRC 16581 / SB1003), this protein is Nickel import ATP-binding protein NikO.